A 337-amino-acid polypeptide reads, in one-letter code: GDP-fucose transporter, Golgi (337 aa).

8 helical membrane-spanning segments follow: residues 13–35 (NKYL…TVFV), 45–67 (VNLG…ICFV), 95–117 (ILPL…SYVT), 121–140 (YYIG…YVIL), 145–163 (SFKC…WLGV), 173–192 (SWRG…MFSI), 205–227 (VWLL…IIIN), and 242–264 (SWFW…VTAL).

The protein belongs to the TPT transporter family. SLC35C subfamily.

Its subcellular location is the golgi apparatus membrane. Its function is as follows. Involved in GDP-fucose import from the cytoplasm into the Golgi lumen. Plays a major role in the fucosylation of N-glycans. Functions redundantly with Efr in the O-fucosylation of Notch, positively regulating Notch signaling. The polypeptide is GDP-fucose transporter, Golgi (Drosophila melanogaster (Fruit fly)).